The sequence spans 778 residues: Endonuclease MutS2 (778 aa).

328–335 (GPNTGGKT) provides a ligand contact to ATP. The Smr domain occupies 702–777 (LDLRGKRYEE…GSGATIVTFK (76 aa)).

It belongs to the DNA mismatch repair MutS family. MutS2 subfamily. In terms of assembly, homodimer. Binds to stalled ribosomes, contacting rRNA.

Functionally, endonuclease that is involved in the suppression of homologous recombination and thus may have a key role in the control of bacterial genetic diversity. Its function is as follows. Acts as a ribosome collision sensor, splitting the ribosome into its 2 subunits. Detects stalled/collided 70S ribosomes which it binds and splits by an ATP-hydrolysis driven conformational change. Acts upstream of the ribosome quality control system (RQC), a ribosome-associated complex that mediates the extraction of incompletely synthesized nascent chains from stalled ribosomes and their subsequent degradation. Probably generates substrates for RQC. In Streptococcus pneumoniae (strain CGSP14), this protein is Endonuclease MutS2.